Here is a 378-residue protein sequence, read N- to C-terminus: Anhydro-N-acetylmuramic acid kinase (378 aa).

ATP is bound at residue 9 to 16 (GTSADGID).

This sequence belongs to the anhydro-N-acetylmuramic acid kinase family.

The enzyme catalyses 1,6-anhydro-N-acetyl-beta-muramate + ATP + H2O = N-acetyl-D-muramate 6-phosphate + ADP + H(+). It participates in amino-sugar metabolism; 1,6-anhydro-N-acetylmuramate degradation. It functions in the pathway cell wall biogenesis; peptidoglycan recycling. In terms of biological role, catalyzes the specific phosphorylation of 1,6-anhydro-N-acetylmuramic acid (anhMurNAc) with the simultaneous cleavage of the 1,6-anhydro ring, generating MurNAc-6-P. Is required for the utilization of anhMurNAc either imported from the medium or derived from its own cell wall murein, and thus plays a role in cell wall recycling. The sequence is that of Anhydro-N-acetylmuramic acid kinase from Prochlorococcus marinus (strain NATL1A).